A 167-amino-acid polypeptide reads, in one-letter code: Neutrophilic granule protein (167 aa).

An N-terminal signal peptide occupies residues 1-21 (MAGLWKTFVLVVALAVVSCEA). The segment at 122–141 (EDTQETSFNDKQDVSEKEKF) is disordered.

This sequence belongs to the cathelicidin family. Monomer. Homodimer; disulfide-linked. In terms of tissue distribution, expressed in myeloid bone marrow cells. Expressed in neutrophilic precursors (at protein level). Expressed in myeloid bone marrow cells.

Its subcellular location is the secreted. The protein localises to the cytoplasmic granule. In terms of biological role, acts as an inhibitor of cathepsin B (CTSB) activity. Plays a role as a negative regulator of tumor vascular development, cell invasion and metastasis. The protein is Neutrophilic granule protein of Mus musculus (Mouse).